The chain runs to 586 residues: Inner membrane protein YejM (586 aa).

At 1–20 (MVTHRQRYREKVSQMVSWGH) the chain is on the cytoplasmic side. The helical transmembrane segment at 21-43 (WFALFNILLSLVIGSRYLFIADW) threads the bilayer. The Periplasmic portion of the chain corresponds to 44–57 (PTTLAGRIYSYVSI). A helical membrane pass occupies residues 58 to 80 (IGHFSFLVFATYLLILFPLTFIV). The Cytoplasmic segment spans residues 81 to 84 (GSQR). Residues 85–103 (LMRFLSVILATAGMTLLLI) traverse the membrane as a helical segment. The Periplasmic segment spans residues 104-134 (DSEVFTRFHLHLNPIVWQLVINPDENEMARD). Residues 135–157 (WQLMFISVPVILLLELVFATWSW) form a helical membrane-spanning segment. Topologically, residues 158 to 168 (QKLRSLTRRRR) are cytoplasmic. A helical membrane pass occupies residues 169–191 (FARPLAAFLFIAFIASHVVYIWA). Residues 192–586 (DANFYRPITM…LTDEKRFIAN (395 aa)) lie on the Periplasmic side of the membrane.

The protein to H.influenzae HI_0842.

Its subcellular location is the cell inner membrane. This chain is Inner membrane protein YejM (yejM), found in Escherichia coli O157:H7.